Reading from the N-terminus, the 80-residue chain is Waprin-Phi3 (80 aa).

The signal sequence occupies residues 1-22 (MKPWILLLLAGLLILSTQLTTA). The WAP domain maps to 31–78 (PKVKPGECPKVKIPPDYPCNQYCVWDFDCEGNKKCCPVGCAKECFPPG). 4 cysteine pairs are disulfide-bonded: cysteine 38–cysteine 66, cysteine 49–cysteine 70, cysteine 53–cysteine 65, and cysteine 59–cysteine 74.

Belongs to the venom waprin family. As to expression, expressed by the venom gland.

The protein resides in the secreted. Its function is as follows. Damages membranes of susceptible bacteria. Has no hemolytic activity. Not toxic to mice. Does not inhibit the proteinases elastase and cathepsin G. The polypeptide is Waprin-Phi3 (Philodryas olfersii (Green snake)).